We begin with the raw amino-acid sequence, 271 residues long: Tryptophan synthase alpha chain (271 aa).

Catalysis depends on proton acceptor residues E49 and D60.

The protein belongs to the TrpA family. Tetramer of two alpha and two beta chains.

The enzyme catalyses (1S,2R)-1-C-(indol-3-yl)glycerol 3-phosphate + L-serine = D-glyceraldehyde 3-phosphate + L-tryptophan + H2O. It functions in the pathway amino-acid biosynthesis; L-tryptophan biosynthesis; L-tryptophan from chorismate: step 5/5. Functionally, the alpha subunit is responsible for the aldol cleavage of indoleglycerol phosphate to indole and glyceraldehyde 3-phosphate. This chain is Tryptophan synthase alpha chain, found in Nitrosococcus oceani (strain ATCC 19707 / BCRC 17464 / JCM 30415 / NCIMB 11848 / C-107).